Consider the following 134-residue polypeptide: Small ribosomal subunit protein uS8c (134 aa).

It belongs to the universal ribosomal protein uS8 family. As to quaternary structure, part of the 30S ribosomal subunit.

It is found in the plastid. One of the primary rRNA binding proteins, it binds directly to 16S rRNA central domain where it helps coordinate assembly of the platform of the 30S subunit. This chain is Small ribosomal subunit protein uS8c (rps8), found in Cuscuta reflexa (Southern Asian dodder).